The sequence spans 453 residues: UDP-N-acetylmuramoylalanine--D-glutamate ligase (453 aa).

Gly119–Thr125 is an ATP binding site.

Belongs to the MurCDEF family.

The protein resides in the cytoplasm. It catalyses the reaction UDP-N-acetyl-alpha-D-muramoyl-L-alanine + D-glutamate + ATP = UDP-N-acetyl-alpha-D-muramoyl-L-alanyl-D-glutamate + ADP + phosphate + H(+). It participates in cell wall biogenesis; peptidoglycan biosynthesis. In terms of biological role, cell wall formation. Catalyzes the addition of glutamate to the nucleotide precursor UDP-N-acetylmuramoyl-L-alanine (UMA). This is UDP-N-acetylmuramoylalanine--D-glutamate ligase from Syntrophus aciditrophicus (strain SB).